Here is a 369-residue protein sequence, read N- to C-terminus: Probable trehalose-phosphate phosphatase D (369 aa).

Positions 63-85 (RASSPTRTRPGNISPLPESDEED) are disordered.

Belongs to the trehalose phosphatase family. A divalent metal cation serves as cofactor.

The enzyme catalyses alpha,alpha-trehalose 6-phosphate + H2O = alpha,alpha-trehalose + phosphate. Its pathway is glycan biosynthesis; trehalose biosynthesis. Functionally, removes the phosphate from trehalose 6-phosphate to produce free trehalose. Trehalose accumulation in plant may improve abiotic stress tolerance. The polypeptide is Probable trehalose-phosphate phosphatase D (TPPD) (Arabidopsis thaliana (Mouse-ear cress)).